A 293-amino-acid chain; its full sequence is Caspase-6 (293 aa).

Residues 1–20 (MSSEPPPRRARGPGEEQNMT) are disordered. Positions 1-23 (MSSEPPPRRARGPGEEQNMTEID) are excised as a propeptide. The tract at residues 42–44 (KRR) is tri-arginine exosite. Position 79 is a phosphoserine (S79). Residue H121 is part of the active site. The interval 125-142 (NHIYAYDAKIEIQTLTGL) is 130's region. C163 is an active-site residue. Positions 180–193 (HRTDTPDANLTQVD) are excised as a propeptide. The residue at position 257 (S257) is a Phosphoserine. S-palmitoyl cysteine attachment occurs at residues C264 and C277.

This sequence belongs to the peptidase C14A family. As to quaternary structure, heterotetramer that consists of two anti-parallel arranged heterodimers, each one formed by a 18 kDa (p18) and a 11 kDa (p11) subunits. Interacts with BIRC6/bruce. Interacts with RIPK3. In terms of assembly, heterotetramer that consists of two anti-parallel arranged heterodimers, each one formed by a 18 kDa (Caspase-6 subunit p18) and a 11 kDa (Caspase-6 subunit p11) subunit. Post-translationally, phosphorylated by NUAK1; phosphorylation inhibits self-activation. Phosphorylation at Ser-257 by AMP-activated protein kinase (PRKAA1 or PRKAA2) inhibits autocleavage, preventing caspase activation, thereby preventing hepatocyte apoptosis. Palmitoylation by ZDHHC17 blocks dimerization and subsequent activation, leading to inhibit the cysteine protease activity. In terms of processing, can be cleaved and activated by different caspases, depending on the context. Cleaved and activated by caspase-8 (CASP8) and subsequently by caspase-3 (CASP3). Can also undergo autoactivation by mediating autocleavage at Asp-179 and Asp-193, while it is not able to cleave its N-terminal disordered prodomain. Cleaved and activated by CASP1, possibly in the context of inflammation.

The protein resides in the cytoplasm. The protein localises to the nucleus. The enzyme catalyses Strict requirement for Asp at position P1 and has a preferred cleavage sequence of Val-Glu-His-Asp-|-.. During activation, the N-terminal disordered prodomain is removed by cleavage. Concomitantly, double cleavage gives rise to a large 18-kDa and a small 11-kDa subunit. The two large and two small subunits then assemble to form the active CASP6 complex. Can be cleaved and activated by different caspases, depending on the context. Cleaved and activated by caspase-8 (CASP8) and subsequently by caspase-3 (CASP3). Can also undergo autoactivation by mediating autocleavage at Asp-179 and Asp-193, while it is not able to cleave its N-terminal disordered prodomain. Intramolecular cleavage at Asp-193 is a prerequisite for CASP6 self-activation. Cleaved and activated by CASP1 in neurons, possibly in the context of inflammation. Phosphorylation at Ser-257 inhibits autocleavage, preventing caspase activation. In terms of biological role, cysteine protease that plays essential roles in programmed cell death, axonal degeneration, development and innate immunity. Acts as a non-canonical executioner caspase during apoptosis: localizes in the nucleus and cleaves the nuclear structural protein NUMA1 and lamin A/LMNA thereby inducing nuclear shrinkage and fragmentation. Lamin-A/LMNA cleavage is required for chromatin condensation and nuclear disassembly during apoptotic execution. Acts as a regulator of liver damage by promoting hepatocyte apoptosis: in absence of phosphorylation by AMP-activated protein kinase (AMPK), catalyzes cleavage of BID, leading to cytochrome c release, thereby participating in nonalcoholic steatohepatitis. Cleaves PARK7/DJ-1 in cells undergoing apoptosis. Involved in intrinsic apoptosis by mediating cleavage of RIPK1. Furthermore, cleaves many transcription factors such as NF-kappa-B and cAMP response element-binding protein/CREBBP. Cleaves phospholipid scramblase proteins XKR4 and XKR9. In addition to apoptosis, involved in different forms of programmed cell death. Plays an essential role in defense against viruses by acting as a central mediator of the ZBP1-mediated pyroptosis, apoptosis, and necroptosis (PANoptosis), independently of its cysteine protease activity. PANoptosis is a unique inflammatory programmed cell death, which provides a molecular scaffold that allows the interactions and activation of machinery required for inflammasome/pyroptosis, apoptosis and necroptosis. Mechanistically, interacts with RIPK3 and enhances the interaction between RIPK3 and ZBP1, leading to ZBP1-mediated inflammasome activation and cell death. Plays an essential role in axon degeneration during axon pruning which is the remodeling of axons during neurogenesis but not apoptosis. Regulates B-cell programs both during early development and after antigen stimulation. This is Caspase-6 from Bos taurus (Bovine).